The primary structure comprises 149 residues: Transthyretin (149 aa).

Positions 1–20 are cleaved as a signal peptide; sequence MAFHSLLLLCLAGLAFVSET. Position 32 is a sulfocysteine (C32). Position 37 (K37) interacts with L-thyroxine. E64 carries the post-translational modification 4-carboxyglutamate. L-thyroxine contacts are provided by E76 and S139.

This sequence belongs to the transthyretin family. In terms of assembly, homotetramer. Dimer of dimers. In the homotetramer, subunits assemble around a central channel that can accommodate two ligand molecules. Interacts with RBP4. Sulfonation of the reactive cysteine Cys-32 enhances the stability of the native conformation of TTR, avoiding misassembly of the protein leading to amyloid formation.

The protein resides in the secreted. Thyroid hormone-binding protein. Probably transports thyroxine from the bloodstream to the brain. The sequence is that of Transthyretin (TTR) from Notamacropus eugenii (Tammar wallaby).